A 504-amino-acid polypeptide reads, in one-letter code: UDP-N-acetylmuramoylalanine--D-glutamate ligase (504 aa).

Residue Gly132–Thr138 participates in ATP binding. The tract at residues Ala284–Gly310 is disordered.

The protein belongs to the MurCDEF family.

Its subcellular location is the cytoplasm. It carries out the reaction UDP-N-acetyl-alpha-D-muramoyl-L-alanine + D-glutamate + ATP = UDP-N-acetyl-alpha-D-muramoyl-L-alanyl-D-glutamate + ADP + phosphate + H(+). The protein operates within cell wall biogenesis; peptidoglycan biosynthesis. Cell wall formation. Catalyzes the addition of glutamate to the nucleotide precursor UDP-N-acetylmuramoyl-L-alanine (UMA). This is UDP-N-acetylmuramoylalanine--D-glutamate ligase from Paraburkholderia phymatum (strain DSM 17167 / CIP 108236 / LMG 21445 / STM815) (Burkholderia phymatum).